We begin with the raw amino-acid sequence, 85 residues long: UPF0291 protein SPH_1589 (85 aa).

Positions 62-85 (TPEKLRQVQREKGLHGRSLDDPNS) are disordered.

It belongs to the UPF0291 family.

The protein localises to the cytoplasm. This Streptococcus pneumoniae (strain Hungary19A-6) protein is UPF0291 protein SPH_1589.